The following is a 234-amino-acid chain: UPF0758 protein Rfer_3252 (234 aa).

Residues 112 to 234 (IFATPDAVKH…ALSMAERGLL (123 aa)) enclose the MPN domain. Residues H183, H185, and D196 each coordinate Zn(2+). The JAMM motif signature appears at 183-196 (HNHPSGTVQPSRAD).

This sequence belongs to the UPF0758 family.

This chain is UPF0758 protein Rfer_3252, found in Albidiferax ferrireducens (strain ATCC BAA-621 / DSM 15236 / T118) (Rhodoferax ferrireducens).